Consider the following 471-residue polypeptide: MTLLQKEYNDVAYISGPLLFVNAASDLPNGAIVNIKDGNGKLRGGRVISVSDQNAVIQVFEETRGLDLATASVSLVEDVARLGVSKEMIGRRFDGLGRPIDGLPAVVAEQRLSVDGQPMNPAARAKPEEFIQTGISTIDVQTSLIRGQKLPIFSGSGLPHNELAAQIARQAKVPGHEGDFAVVFAAMGLTQREVSFFTQEFERTGALARSVLFLNKADDPAVERLLTPRMALTTAEYLAFEHGYHVLVILTDLTNYCEALREIGGAREEIPGRRGFPGYMYTDLASLYERAGVVEGKPGSVTQVPILSMPDDDITHPIPDLTGYITEGQIVVDRTLNSKGVFPPINPLPSLSRLQGNGIGKGKTRADHKNVADQLFAAYANGLDLRKLVAITGEDALTETDKLYLKFSDDFENYFIGQGDQDRSIDDSLTVAWGILSKLPQSQLTRLSKDSIDKYYGTKMDEMWKGGRSSI.

This sequence belongs to the ATPase alpha/beta chains family.

Its function is as follows. Produces ATP from ADP in the presence of a proton gradient across the membrane. The V-type beta chain is a regulatory subunit. The chain is V-type ATP synthase beta chain (atpB) from Deinococcus radiodurans (strain ATCC 13939 / DSM 20539 / JCM 16871 / CCUG 27074 / LMG 4051 / NBRC 15346 / NCIMB 9279 / VKM B-1422 / R1).